The primary structure comprises 400 residues: GDNF family receptor alpha-3 (400 aa).

An N-terminal signal peptide occupies residues 1–31 (MVRPLNPRPLPPVVLMLLLLLPPSPLPLAAG). Cys51 and Cys57 are joined by a disulfide. N-linked (GlcNAc...) asparagine glycosylation is found at Asn95 and Asn148. Intrachain disulfides connect Cys162–Cys218, Cys169–Cys175, Cys186–Cys196, Cys191–Cys239, Cys220–Cys227, Cys248–Cys316, Cys255–Cys261, Cys272–Cys288, Cys281–Cys340, and Cys318–Cys328. N-linked (GlcNAc...) asparagine glycosylation is present at Asn309. Asn374 is lipidated: GPI-anchor amidated asparagine. A propeptide spans 375-400 (PAVRPQPWVPSLFSCTLPLILLLSLW) (removed in mature form).

This sequence belongs to the GDNFR family. In terms of assembly, interacts with ARTN ligand and RET: forms a 2:2:2 ternary complex composed of ARTN ligand, GFRA3 and RET receptor. Interacts with SORL1. In terms of processing, N-glycosylated. As to expression, widely expressed in adult and fetus which exhibit a similar pattern. Essentially not expressed in the central nervous system, but highly expressed in several sensory and sympathetic ganglia of the peripheral nervous system. Moderate expression in many non-neuronal tissues, particularly those of the digestive and urogenital systems, but high expression in stomach and appendix. Several types of glandular tissues show low expression. Very low or no expression detected in the hematopoietic system.

It localises to the cell membrane. In terms of biological role, receptor for artemin (ARTN), a growth factor that supports the survival of sensory and sympathetic peripheral neurons. ARTN-binding leads to autophosphorylation and activation of the RET receptor. The protein is GDNF family receptor alpha-3 (GFRA3) of Homo sapiens (Human).